A 204-amino-acid polypeptide reads, in one-letter code: Large ribosomal subunit protein uL4 (204 aa).

The tract at residues 53–77 (ISDVSGTTAKPYSQKRTGRARQGSL) is disordered. Over residues 56–67 (VSGTTAKPYSQK) the composition is skewed to polar residues.

The protein belongs to the universal ribosomal protein uL4 family. Part of the 50S ribosomal subunit.

One of the primary rRNA binding proteins, this protein initially binds near the 5'-end of the 23S rRNA. It is important during the early stages of 50S assembly. It makes multiple contacts with different domains of the 23S rRNA in the assembled 50S subunit and ribosome. Its function is as follows. Forms part of the polypeptide exit tunnel. In Wolbachia sp. subsp. Brugia malayi (strain TRS), this protein is Large ribosomal subunit protein uL4.